The sequence spans 1198 residues: Chromosome partition protein Smc (1198 aa).

Residue 40 to 47 coordinates ATP; it reads PNGSGKSN. Coiled-coil stretches lie at residues 175-211 and 322-524; these read ITKYRMRKREALKRLDETEHNLERIRDILAEIEGQLG and LGEQ…LAKK. The SMC hinge domain maps to 534 to 647; sequence CGTLADLLQV…VTDMEAATRV (114 aa). Residues 687-1042 are a coiled coil; it reads SREIQELRQE…AELDKTMSER (356 aa). The interval 785–818 is disordered; it reads AEEQSKLTDSIQEAQEALARQEEKNRQASREMEQ. Positions 803–818 are enriched in basic and acidic residues; it reads ARQEEKNRQASREMEQ.

Belongs to the SMC family. As to quaternary structure, homodimer.

The protein localises to the cytoplasm. Its function is as follows. Required for chromosome condensation and partitioning. In Desulfitobacterium hafniense (strain Y51), this protein is Chromosome partition protein Smc.